Reading from the N-terminus, the 360-residue chain is A-type ATP synthase subunit C (360 aa).

Residues 1–25 (MRLLEKLWGQKPSRKSDKKKNGTSN) form a disordered region.

This sequence belongs to the V-ATPase V0D/AC39 subunit family. Has multiple subunits with at least A(3), B(3), C, D, E, F, H, I and proteolipid K(x).

It is found in the cell membrane. In terms of biological role, component of the A-type ATP synthase that produces ATP from ADP in the presence of a proton gradient across the membrane. The polypeptide is A-type ATP synthase subunit C (Methanosarcina barkeri (strain Fusaro / DSM 804)).